The following is a 539-amino-acid chain: F-box only protein 31 (539 aa).

The tract at residues 11–53 is disordered; the sequence is GPSRGCRRRQQRRGPAETAAADSEPDTDPEEERIEASAGVGGG. The residue at position 33 (Ser33) is a Phosphoserine. At Ser33 the chain carries Phosphoserine; by PKB/AKT1. A compositionally biased stretch (acidic residues) spans 33-43; that stretch reads SEPDTDPEEER. At Thr37 the chain carries Phosphothreonine. The D box motif lies at 64 to 69; the sequence is RCSLLE. One can recognise an F-box domain in the interval 64-110; it reads RCSLLELPPELLVEIFASLPGTDLPSLAQVCTKFRRILHTDTIWRRR. Positions 206, 214, 230, and 236 each coordinate Zn(2+). The residue at position 278 (Ser278) is a Phosphoserine; by ATM. Residues 297-299 carry the DDL motif motif; it reads DDL. Residues 377 to 397 are compositionally biased toward basic and acidic residues; the sequence is VRQEQQEGGHEAGEGRGRQGP. The segment at 377–446 is disordered; that stretch reads VRQEQQEGGH…PAQCGQGQPF (70 aa). Thr419 is modified (phosphothreonine; by MTOR). At Ser480 the chain carries Phosphoserine.

It belongs to the FBXO31 family. Part of a SCF (SKP1-cullin-F-box) protein ligase complex SCF(FBXO31) composed of CUL1, SKP1, RBX1 and FBXO31. Interacts (when phosphorylated at Ser-33) with CDC20, promoting ubiquitination by the APC/C complex. Phosphorylation at Ser-278 by ATM following gamma-irradiation results in its stabilization. Phosphorylation at Thr-419 and Ser-480 in absence of stress promotes its ubiquitination and degradation by the SCF(FBXO46) complex. Phosphorylation at Ser-33 by AKT1 promotes association with CDC20 and ubiquitination by the APC/C complex. Post-translationally, ubiquitinated by the SCF(FBXO46) complex in absence of stress, promoting its degradation. Ubiquitinated by the APC/C complex following phosphorylation at Ser-33, leading to its degradation by the proteasome. As to expression, highly expressed in brain. Expressed at moderate levels in most tissues, except bone marrow.

The protein localises to the cytoplasm. It is found in the cytoskeleton. It localises to the microtubule organizing center. The protein resides in the centrosome. Its pathway is protein modification; protein ubiquitination. In terms of biological role, substrate-recognition component of the SCF(FBXO31) protein ligase complex, which specifically mediates the ubiquitination of proteins amidated at their C-terminus in response to oxidative stress, leading to their degradation by the proteasome. FBXO31 specifically recognizes and binds C-terminal peptides bearing an amide: C-terminal amidation in response to oxidative stress takes place following protein fragmentation. The SCF(FBXO31) also plays a role in G1 arrest following DNA damage by mediating ubiquitination of phosphorylated cyclin-D1 (CCND1), promoting its degradation by the proteasome, resulting in G1 arrest. The SCF(FBXO31) complex is however not a major regulator of CCND1 stability during the G1/S transition. In response to genotoxic stress, the SCF(FBXO31) complex directs ubiquitination and degradation of phosphorylated MDM2, thereby promoting p53/TP53-mediated DNA damage response. SCF(FBXO31) complex is required for genomic integrity by catalyzing ubiquitination and degradation of cyclin-A (CCNA1 and/or CCNA2) during the G1 phase. In response to genotoxic stress, the SCF(FBXO31) complex directs ubiquitination and degradation of phosphorylated FBXO46 and MAP2K6. SCF(FBXO31) complex promotes ubiquitination and degradation of CDT1 during the G2 phase to prevent re-replication. The SCF(FBXO31) complex also mediates ubiquitination and degradation of DUSP6, OGT and PARD6A. The polypeptide is F-box only protein 31 (Homo sapiens (Human)).